The following is a 379-amino-acid chain: MSADKVTLADLPLRDNLRGKSPYGAPQLQVPVRLNTNENPHPPSKALVDDVAASVREAAAELHRYPDRDAVALRTDLAAYLTAATGVRLGVENLWAANGSNEILQQLLQAFGGPGRTAIGFVPSYSMHPIISDGTQTEWLQASRAEDFGLDIDVAVSAVTERKPDVVFVTSPNNPSGQSVPLDDLRRVLDAMQGGILIVDEAYGEFSSQPSAVALLDDYPAKLVVSRTMSKAFAFAGGRLGYLAAAPAVIDALLLVRLPYHLSVLTQAAARAALRHADDTLGSVKALIAERERVSAELTRMGYRVIPSDANFVLFGAFTDAPATWQRYLDAGVLIRDVGIPGHLRVTIGLAAENDAFLAAGAELAGTELQPSTSPVGAQ.

Lys-231 carries the N6-(pyridoxal phosphate)lysine modification.

Belongs to the class-II pyridoxal-phosphate-dependent aminotransferase family. Histidinol-phosphate aminotransferase subfamily. As to quaternary structure, homodimer. Pyridoxal 5'-phosphate is required as a cofactor.

The enzyme catalyses L-histidinol phosphate + 2-oxoglutarate = 3-(imidazol-4-yl)-2-oxopropyl phosphate + L-glutamate. The protein operates within amino-acid biosynthesis; L-histidine biosynthesis; L-histidine from 5-phospho-alpha-D-ribose 1-diphosphate: step 7/9. The chain is Histidinol-phosphate aminotransferase from Mycolicibacterium smegmatis (strain ATCC 700084 / mc(2)155) (Mycobacterium smegmatis).